The primary structure comprises 89 residues: Small ribosomal subunit protein bS18 (89 aa).

The protein belongs to the bacterial ribosomal protein bS18 family. Part of the 30S ribosomal subunit. Forms a tight heterodimer with protein bS6.

Its function is as follows. Binds as a heterodimer with protein bS6 to the central domain of the 16S rRNA, where it helps stabilize the platform of the 30S subunit. The chain is Small ribosomal subunit protein bS18 from Parabacteroides distasonis (strain ATCC 8503 / DSM 20701 / CIP 104284 / JCM 5825 / NCTC 11152).